A 492-amino-acid polypeptide reads, in one-letter code: GTPase Obg (492 aa).

One can recognise an Obg domain in the interval 2 to 159; sequence PRFVDRVVIH…RELTLELKTV (158 aa). Positions 160-340 constitute an OBG-type G domain; sequence ADVGLIGFPS…LIFGLWQMIS (181 aa). GTP is bound by residues 166–173, 191–195, 212–215, 292–295, and 321–323; these read GFPSAGKS, FTTLV, DVPG, NKID, and STV. Mg(2+) contacts are provided by Ser-173 and Thr-193. Positions 358–438 constitute an OCT domain; it reads PVPVDDSGFR…IGDMTFDWEP (81 aa). The tract at residues 449 to 492 is disordered; sequence SGRGTDARLERTERVGAAERKAARRQRRTGDDAERGTTERGENT. Basic and acidic residues-rich tracts occupy residues 453–469 and 476–492; these read TDAR…AERK and RTGD…GENT.

Belongs to the TRAFAC class OBG-HflX-like GTPase superfamily. OBG GTPase family. Monomer. Mg(2+) serves as cofactor.

Its subcellular location is the cytoplasm. Its function is as follows. An essential GTPase which binds GTP, GDP and possibly (p)ppGpp with moderate affinity, with high nucleotide exchange rates and a fairly low GTP hydrolysis rate. Plays a role in control of the cell cycle, stress response, ribosome biogenesis and in those bacteria that undergo differentiation, in morphogenesis control. The protein is GTPase Obg of Mycobacterium avium (strain 104).